Consider the following 186-residue polypeptide: Casparian strip membrane protein 3 (186 aa).

Over methionine 1 to serine 26 the chain is Cytoplasmic. The chain crosses the membrane as a helical span at residues valine 27–methionine 47. Residues glycine 48–threonine 74 lie on the Extracellular side of the membrane. Residue asparagine 51 is glycosylated (N-linked (GlcNAc...) asparagine). A helical membrane pass occupies residues phenylalanine 75–isoleucine 95. The Cytoplasmic portion of the chain corresponds to valine 96–arginine 107. Residues leucine 108–alanine 128 traverse the membrane as a helical segment. Residues alanine 129–serine 161 lie on the Extracellular side of the membrane. Residues leucine 162–alanine 182 traverse the membrane as a helical segment. At leucine 183–arginine 186 the chain is on the cytoplasmic side.

It belongs to the Casparian strip membrane proteins (CASP) family. In terms of assembly, homodimer and heterodimers.

Its subcellular location is the cell membrane. Its function is as follows. Regulates membrane-cell wall junctions and localized cell wall deposition. Required for establishment of the Casparian strip membrane domain (CSD) and the subsequent formation of Casparian strips, a cell wall modification of the root endodermis that determines an apoplastic barrier between the intraorganismal apoplasm and the extraorganismal apoplasm and prevents lateral diffusion. The protein is Casparian strip membrane protein 3 of Sorghum bicolor (Sorghum).